Consider the following 153-residue polypeptide: Small ribosomal subunit protein bS6 (153 aa).

Positions Glu-97–Glu-153 are disordered. The segment covering Arg-105–Glu-147 has biased composition (basic and acidic residues).

The protein belongs to the bacterial ribosomal protein bS6 family.

In terms of biological role, binds together with bS18 to 16S ribosomal RNA. This Bradyrhizobium sp. (strain BTAi1 / ATCC BAA-1182) protein is Small ribosomal subunit protein bS6.